Reading from the N-terminus, the 164-residue chain is Ribosome maturation factor RimM (164 aa).

The PRC barrel domain maps to 93–164 (DSEYYVANLN…FVVIVPPEFI (72 aa)).

The protein belongs to the RimM family. As to quaternary structure, binds ribosomal protein uS19.

Its subcellular location is the cytoplasm. Its function is as follows. An accessory protein needed during the final step in the assembly of 30S ribosomal subunit, possibly for assembly of the head region. Essential for efficient processing of 16S rRNA. May be needed both before and after RbfA during the maturation of 16S rRNA. It has affinity for free ribosomal 30S subunits but not for 70S ribosomes. The protein is Ribosome maturation factor RimM of Orientia tsutsugamushi (strain Boryong) (Rickettsia tsutsugamushi).